The sequence spans 173 residues: Large ribosomal subunit protein uL10 (173 aa).

This sequence belongs to the universal ribosomal protein uL10 family. Part of the ribosomal stalk of the 50S ribosomal subunit. The N-terminus interacts with L11 and the large rRNA to form the base of the stalk. The C-terminus forms an elongated spine to which L12 dimers bind in a sequential fashion forming a multimeric L10(L12)X complex.

Its function is as follows. Forms part of the ribosomal stalk, playing a central role in the interaction of the ribosome with GTP-bound translation factors. The polypeptide is Large ribosomal subunit protein uL10 (Bifidobacterium adolescentis (strain ATCC 15703 / DSM 20083 / NCTC 11814 / E194a)).